The primary structure comprises 170 residues: Adenine phosphoribosyltransferase (170 aa).

The protein belongs to the purine/pyrimidine phosphoribosyltransferase family. Homodimer.

It is found in the cytoplasm. It carries out the reaction AMP + diphosphate = 5-phospho-alpha-D-ribose 1-diphosphate + adenine. The protein operates within purine metabolism; AMP biosynthesis via salvage pathway; AMP from adenine: step 1/1. Functionally, catalyzes a salvage reaction resulting in the formation of AMP, that is energically less costly than de novo synthesis. The protein is Adenine phosphoribosyltransferase of Clostridioides difficile (strain 630) (Peptoclostridium difficile).